The following is a 399-amino-acid chain: Acetate kinase 2 (399 aa).

Mg(2+) is bound at residue asparagine 10. Lysine 17 is an ATP binding site. Substrate is bound at residue arginine 89. Aspartate 146 (proton donor/acceptor) is an active-site residue. Residues 206–210, 281–283, and 329–333 each bind ATP; these read HLGNG, DCR, and GIGEN. A Mg(2+)-binding site is contributed by glutamate 384.

It belongs to the acetokinase family. In terms of assembly, homodimer. It depends on Mg(2+) as a cofactor. Requires Mn(2+) as cofactor.

The protein localises to the cytoplasm. It catalyses the reaction acetate + ATP = acetyl phosphate + ADP. Its pathway is metabolic intermediate biosynthesis; acetyl-CoA biosynthesis; acetyl-CoA from acetate: step 1/2. In terms of biological role, catalyzes the formation of acetyl phosphate from acetate and ATP. Can also catalyze the reverse reaction. The sequence is that of Acetate kinase 2 from Neisseria meningitidis serogroup A / serotype 4A (strain DSM 15465 / Z2491).